The following is an 87-amino-acid chain: UPF0473 protein Dred_0776 (87 aa).

It belongs to the UPF0473 family.

The protein is UPF0473 protein Dred_0776 of Desulforamulus reducens (strain ATCC BAA-1160 / DSM 100696 / MI-1) (Desulfotomaculum reducens).